The sequence spans 21 residues: Thylakoid lumenal 13.8 kDa protein (21 aa).

Its subcellular location is the plastid. It localises to the chloroplast thylakoid lumen. This is Thylakoid lumenal 13.8 kDa protein from Spinacia oleracea (Spinach).